The chain runs to 633 residues: Biosynthetic arginine decarboxylase (633 aa).

An N6-(pyridoxal phosphate)lysine modification is found at Lys101. 284–294 (VDVGGGLGVDY) contacts substrate.

It belongs to the Orn/Lys/Arg decarboxylase class-II family. SpeA subfamily. The cofactor is Mg(2+). Requires pyridoxal 5'-phosphate as cofactor.

The catalysed reaction is L-arginine + H(+) = agmatine + CO2. The protein operates within amine and polyamine biosynthesis; agmatine biosynthesis; agmatine from L-arginine: step 1/1. Functionally, catalyzes the biosynthesis of agmatine from arginine. The sequence is that of Biosynthetic arginine decarboxylase from Aeromonas salmonicida (strain A449).